The following is a 105-amino-acid chain: Vacuolar ATPase assembly integral membrane protein VMA21 homolog (105 aa).

The interval 1-26 is disordered; that stretch reads MSTKNKKAAGGNGGAPKQTRQQSHDS. Topologically, residues 1 to 36 are cytoplasmic; sequence MSTKNKKAAGGNGGAPKQTRQQSHDSQDYSSFKTVL. The helical transmembrane segment at 37–57 threads the bilayer; that stretch reads FYCMLIVFLPVLTFFVLKGFV. Residues 58 to 68 are Lumenal-facing; sequence LDQFLDISEVK. A helical membrane pass occupies residues 69-89; the sequence is VNIASAVGAVVALHIALGLYI. At 90–105 the chain is on the cytoplasmic side; it reads YRAYFGAPGSKGSKTD.

This sequence belongs to the VMA21 family.

It localises to the endoplasmic reticulum membrane. The protein localises to the endoplasmic reticulum-Golgi intermediate compartment membrane. The protein resides in the cytoplasmic vesicle. It is found in the COPII-coated vesicle membrane. In terms of biological role, required for the assembly of the V0 complex of the vacuolar ATPase (V-ATPase) in the endoplasmic reticulum. The chain is Vacuolar ATPase assembly integral membrane protein VMA21 homolog from Drosophila simulans (Fruit fly).